We begin with the raw amino-acid sequence, 93 residues long: Neurophysin 1 (93 aa).

7 disulfide bridges follow: cysteine 10/cysteine 54, cysteine 13/cysteine 27, cysteine 21/cysteine 44, cysteine 28/cysteine 34, cysteine 61/cysteine 74, cysteine 68/cysteine 86, and cysteine 75/cysteine 80.

This sequence belongs to the vasopressin/oxytocin family.

In terms of biological role, neurophysin 1 specifically binds oxytocin. The sequence is that of Neurophysin 1 from Struthio camelus (Common ostrich).